A 108-amino-acid chain; its full sequence is Nucleoid-associated protein ACP_0492 (108 aa).

The protein belongs to the YbaB/EbfC family. Homodimer.

It is found in the cytoplasm. It localises to the nucleoid. Binds to DNA and alters its conformation. May be involved in regulation of gene expression, nucleoid organization and DNA protection. The chain is Nucleoid-associated protein ACP_0492 from Acidobacterium capsulatum (strain ATCC 51196 / DSM 11244 / BCRC 80197 / JCM 7670 / NBRC 15755 / NCIMB 13165 / 161).